Consider the following 118-residue polypeptide: Fluoride-specific ion channel FluC 1 (118 aa).

Helical transmembrane passes span 1–21 and 29–49; these read MIQC…RGFV and FNTS…FCIG. Positions 71 and 74 each coordinate Na(+). Residues 95–115 traverse the membrane as a helical segment; it reads LFILYSILQYGVSFVACLLGY.

Belongs to the fluoride channel Fluc/FEX (TC 1.A.43) family.

It localises to the cell membrane. The catalysed reaction is fluoride(in) = fluoride(out). With respect to regulation, na(+) is not transported, but it plays an essential structural role and its presence is essential for fluoride channel function. Its function is as follows. Fluoride-specific ion channel. Important for reducing fluoride concentration in the cell, thus reducing its toxicity. This chain is Fluoride-specific ion channel FluC 1, found in Staphylococcus saprophyticus subsp. saprophyticus (strain ATCC 15305 / DSM 20229 / NCIMB 8711 / NCTC 7292 / S-41).